Here is a 340-residue protein sequence, read N- to C-terminus: UDP-N-acetylglucosamine--N-acetylmuramyl-(pentapeptide) pyrophosphoryl-undecaprenol N-acetylglucosamine transferase (340 aa).

UDP-N-acetyl-alpha-D-glucosamine-binding positions include 10–12 (TGG), Asn110, Ser171, and Gln272.

It belongs to the glycosyltransferase 28 family. MurG subfamily.

Its subcellular location is the cell membrane. The catalysed reaction is di-trans,octa-cis-undecaprenyl diphospho-N-acetyl-alpha-D-muramoyl-L-alanyl-D-glutamyl-meso-2,6-diaminopimeloyl-D-alanyl-D-alanine + UDP-N-acetyl-alpha-D-glucosamine = di-trans,octa-cis-undecaprenyl diphospho-[N-acetyl-alpha-D-glucosaminyl-(1-&gt;4)]-N-acetyl-alpha-D-muramoyl-L-alanyl-D-glutamyl-meso-2,6-diaminopimeloyl-D-alanyl-D-alanine + UDP + H(+). It participates in cell wall biogenesis; peptidoglycan biosynthesis. Functionally, cell wall formation. Catalyzes the transfer of a GlcNAc subunit on undecaprenyl-pyrophosphoryl-MurNAc-pentapeptide (lipid intermediate I) to form undecaprenyl-pyrophosphoryl-MurNAc-(pentapeptide)GlcNAc (lipid intermediate II). This chain is UDP-N-acetylglucosamine--N-acetylmuramyl-(pentapeptide) pyrophosphoryl-undecaprenol N-acetylglucosamine transferase, found in Wolbachia pipientis subsp. Culex pipiens (strain wPip).